Consider the following 66-residue polypeptide: UPF0370 protein YpfN (66 aa).

The helical transmembrane segment at 4-24 (LAKYWWILVLVFLVGVLLNVI) threads the bilayer. The segment at 39-66 (KPELPPHRDFNDKWDDEDDWPKKDQPKK) is disordered. A compositionally biased stretch (basic and acidic residues) spans 42–51 (LPPHRDFNDK).

This sequence belongs to the UPF0370 family.

The protein localises to the cell membrane. This chain is UPF0370 protein YpfN, found in Salmonella paratyphi C (strain RKS4594).